Consider the following 365-residue polypeptide: 2-aminoethylphosphonate--pyruvate transaminase (365 aa).

An N6-(pyridoxal phosphate)lysine modification is found at Lys194.

It belongs to the class-V pyridoxal-phosphate-dependent aminotransferase family. PhnW subfamily. As to quaternary structure, homodimer. The cofactor is pyridoxal 5'-phosphate.

The enzyme catalyses (2-aminoethyl)phosphonate + pyruvate = phosphonoacetaldehyde + L-alanine. Functionally, involved in phosphonate degradation. The sequence is that of 2-aminoethylphosphonate--pyruvate transaminase from Bacillus cereus (strain ZK / E33L).